We begin with the raw amino-acid sequence, 922 residues long: Coronin-7 (922 aa).

WD repeat units follow at residues 75–115, 124–163, 166–205, and 209–253; these read CHSD…EALP, PEEL…PLTE, AHKD…QASQ, and AHEN…SALA. The interval 419-467 is disordered; it reads DTDLSEGFSSPSSLMSPSTPSSLGPSLSSTSGIGTSPSQRSLQSLLGPS. Residues 427–456 show a composition bias toward low complexity; it reads SSPSSLMSPSTPSSLGPSLSSTSGIGTSPS. Residues S459 and S462 each carry the phosphoserine modification. Residue K469 forms a Glycyl lysine isopeptide (Lys-Gly) (interchain with G-Cter in ubiquitin) linkage. WD repeat units follow at residues 539–581, 589–629, 632–671, and 725–765; these read QNGT…NVLT, GHTE…ERLK, GHQD…LPLQ, and DVAP…PFFL. The disordered stretch occupies residues 858 to 922; that stretch reads GMTPVSQAPR…FEGVDEDEWD (65 aa). A compositionally biased stretch (basic and acidic residues) spans 881–893; that stretch reads LEEKSDQQKKEEL. Phosphoserine is present on S912.

This sequence belongs to the WD repeat coronin family. In terms of assembly, interacts with clathrin adapter AP1 complex. This interaction takes place at Golgi membranes and not AP1-positive endosomal membranes. Interacts (when ubiquitinated at Lys-469) with EPS15. The membrane-associated form is phosphorylated on tyrosine residues. In terms of processing, ubiquitinated via 'Lys-33'-linked ubiquitin chains by the BCR(KLHL20) E3 ubiquitin ligase complex: 'Lys-33'-linked ubiquitination promotes interaction with EPS15 and facilitates actin polymerization at the trans-Golgi network, thereby facilitating post-Golgi trafficking. Deubiquitinated by ZRANB1/TRABID. In terms of tissue distribution, in the adult, widely expressed with highest levels in brain, thymus and kidney and low levels in skeletal and heart muscle. Not expressed in lung. In the eye, strongly expressed in the outer plexiform layer of the retina. In the intestine, expressed both in terminally differentiated epithelial cells and in crypt epithelium. In the embryo, strongest expression is seen in brain, thymus, intestine, apical epidermal layers of the skin and developing lens fibers of the eye.

The protein resides in the golgi apparatus membrane. The protein localises to the golgi apparatus. It is found in the trans-Golgi network. It localises to the cytoplasmic vesicle. Its subcellular location is the cytoplasm. The protein resides in the cytosol. Functionally, F-actin regulator involved in anterograde Golgi to endosome transport: upon ubiquitination via 'Lys-33'-linked ubiquitin chains by the BCR(KLHL20) E3 ubiquitin ligase complex, interacts with EPS15 and localizes to the trans-Golgi network, where it promotes actin polymerization, thereby facilitating post-Golgi trafficking. May play a role in the maintenance of the Golgi apparatus morphology. This chain is Coronin-7 (Coro7), found in Mus musculus (Mouse).